We begin with the raw amino-acid sequence, 186 residues long: Adenine phosphoribosyltransferase (186 aa).

This sequence belongs to the purine/pyrimidine phosphoribosyltransferase family. As to quaternary structure, homodimer.

The protein localises to the cytoplasm. The enzyme catalyses AMP + diphosphate = 5-phospho-alpha-D-ribose 1-diphosphate + adenine. It participates in purine metabolism; AMP biosynthesis via salvage pathway; AMP from adenine: step 1/1. Catalyzes a salvage reaction resulting in the formation of AMP, that is energically less costly than de novo synthesis. In Xanthomonas oryzae pv. oryzae (strain PXO99A), this protein is Adenine phosphoribosyltransferase.